A 321-amino-acid chain; its full sequence is Large ribosomal RNA subunit accumulation protein YCED homolog 1, chloroplastic (321 aa).

A chloroplast-targeting transit peptide spans Met-1–Ser-32.

Belongs to the DUF177 domain family.

It is found in the plastid. It localises to the chloroplast stroma. Its subcellular location is the chloroplast nucleoid. Its function is as follows. Plays a role in synthesis, processing and/or stability of 23S rRNA. Required for embryogenesis. The protein is Large ribosomal RNA subunit accumulation protein YCED homolog 1, chloroplastic of Arabidopsis thaliana (Mouse-ear cress).